A 331-amino-acid chain; its full sequence is DNA-directed RNA polymerase subunit alpha (331 aa).

The segment at 1-230 is alpha N-terminal domain (alpha-NTD); sequence MKNIKTSPYI…KQMSVFNSEW (230 aa). The interval 247 to 331 is alpha C-terminal domain (alpha-CTD); the sequence is LKPLLQKIEA…ALQKRLNKLK (85 aa).

This sequence belongs to the RNA polymerase alpha chain family. Homodimer. The RNAP catalytic core consists of 2 alpha, 1 beta/beta' and 1 omega subunit. When a sigma factor is associated with the core the holoenzyme is formed, which can initiate transcription.

The enzyme catalyses RNA(n) + a ribonucleoside 5'-triphosphate = RNA(n+1) + diphosphate. Its function is as follows. DNA-dependent RNA polymerase catalyzes the transcription of DNA into RNA using the four ribonucleoside triphosphates as substrates. The chain is DNA-directed RNA polymerase subunit alpha from Wolinella succinogenes (strain ATCC 29543 / DSM 1740 / CCUG 13145 / JCM 31913 / LMG 7466 / NCTC 11488 / FDC 602W) (Vibrio succinogenes).